Here is a 57-residue protein sequence, read N- to C-terminus: Large ribosomal subunit protein bL33 (57 aa).

This sequence belongs to the bacterial ribosomal protein bL33 family.

This Shewanella sp. (strain W3-18-1) protein is Large ribosomal subunit protein bL33.